Here is a 566-residue protein sequence, read N- to C-terminus: Peroxisomal leader peptide-processing protease (566 aa).

Positions 319-531 (ALAALLPPEV…LQPALQQYSQ (213 aa)) are serine protease. Active-site charge relay system residues include His372, Asp408, and Ser481.

The protein belongs to the peptidase S1B family. Homodimer. Forms a heterodimer with the C-terminal cleavage product (45 kDa form). Forms a heterodimer with the N-terminal cleavage product (15 kDa form). Interacts with PEX5. Interacts with LONP2. In terms of processing, self-cleavage gives rise to an N-terminal 15-kDa fragment and C-terminal 45-kDa fragment upon import into the peroxisomes. The full-lengh TYSND1 is the active the proteolytic processing of PTS1- and PTS2-proteins and in self-cleavage, and intermolecular self-cleavage of TYSND1 down-regulates its protease activity.

It localises to the peroxisome. Peroxisomal protease that mediates both the removal of the leader peptide from proteins containing a PTS2 target sequence and processes several PTS1-containing proteins. Catalyzes the processing of PTS1-proteins involved in the peroxisomal beta-oxidation of fatty acids. The sequence is that of Peroxisomal leader peptide-processing protease (TYSND1) from Homo sapiens (Human).